Consider the following 297-residue polypeptide: MKSRKSYGHLLSPVGSPPLDNESGEAAAAAAAGGGGCGSSAGYVVYGGGGGGDSPAKEQDRFLPIANVSRIMKRSLPANAKISKESKETVQECVSEFISFVTGEASDKCQREKRKTINGDDLLWAMTTLGFEAYVGPLKSYLNRYREAEGEKADVLGGAGGAAAARHGEGGCCGGGGGGADGVVIDGHYPLAGGLSHSHHGHQQQDGGGDVGLMMGGGDAGVGYNAGAGSTTTAFYAPAATAASGNKAYCGGDGSRVMEFEGIGGEEESGGGGGGGERGFAGHLHGVQWFRLKRNTN.

Residues 1-25 (MKSRKSYGHLLSPVGSPPLDNESGE) are disordered. The DNA-binding element occupies 63 to 69 (LPIANVS). Residues 90–101 (VQECVSEFISFV) are subunit association domain (SAD).

The protein belongs to the NFYB/HAP3 subunit family. In terms of assembly, heterotrimeric transcription factor composed of three components, NF-YA, NF-YB and NF-YC. NF-YB and NF-YC must interact and dimerize for NF-YA association and DNA binding. Interacts with NFYC2, NFYC4 and NFYC6. As to expression, expressed in roots, culms, nodes, leaf blades, leaf sheaths and young panicles.

It is found in the nucleus. Its subcellular location is the cytoplasm. Probable transcription factor involved in the regulation of flowering time under long day (LD) conditions. Functions as a repressor of flowering, independently of HD1 and GHD7. Controls flowering time by negatively regulating the expression of EHD1 and HD3A. Regulates plant height by promoting cell elongation in the internodes. Component of the NF-Y/HAP transcription factor complex. The polypeptide is Nuclear transcription factor Y subunit B-11 (HD5) (Oryza sativa subsp. japonica (Rice)).